Here is a 305-residue protein sequence, read N- to C-terminus: MQRSNHTVTEFILLGFTTDPGMQLGLFVVFLGVYSLTVVGNSTLIVLICNDSCLHTPMYFFTGNLSFLDLWYSSVYTPKILVTCISEDKSISFAGCLCQFFFSAGLAYSECYLLAAVAYDRYVAISKPLLYAQAMSIKLCALLVAVSYCGGFINSSIITKKTFSFNFCRENIIDDFFCDLLPLVELACGEKGGYKIMMYFLLASNVICPAVLILASYLFIITSVLRISSSKGYLKAFSTCSSHLTSVTLYYGSILYIYALPRSSYSFDMDKIVSTFYTVVFPMLNLMIYSLRNKDVKEALKKLLP.

The Extracellular segment spans residues 1 to 24; it reads MQRSNHTVTEFILLGFTTDPGMQL. Asn5 is a glycosylation site (N-linked (GlcNAc...) asparagine). A helical membrane pass occupies residues 25 to 45; that stretch reads GLFVVFLGVYSLTVVGNSTLI. Over 46 to 53 the chain is Cytoplasmic; that stretch reads VLICNDSC. A helical membrane pass occupies residues 54-74; it reads LHTPMYFFTGNLSFLDLWYSS. Over 75 to 98 the chain is Extracellular; it reads VYTPKILVTCISEDKSISFAGCLC. An intrachain disulfide couples Cys96 to Cys188. Residues 99 to 119 form a helical membrane-spanning segment; the sequence is QFFFSAGLAYSECYLLAAVAY. The Cytoplasmic portion of the chain corresponds to 120–138; sequence DRYVAISKPLLYAQAMSIK. The helical transmembrane segment at 139–159 threads the bilayer; that stretch reads LCALLVAVSYCGGFINSSIIT. At 160 to 196 the chain is on the extracellular side; the sequence is KKTFSFNFCRENIIDDFFCDLLPLVELACGEKGGYKI. The helical transmembrane segment at 197 to 216 threads the bilayer; it reads MMYFLLASNVICPAVLILAS. At 217 to 236 the chain is on the cytoplasmic side; that stretch reads YLFIITSVLRISSSKGYLKA. A helical transmembrane segment spans residues 237-257; that stretch reads FSTCSSHLTSVTLYYGSILYI. Topologically, residues 258-270 are extracellular; sequence YALPRSSYSFDMD. Residues 271 to 291 traverse the membrane as a helical segment; sequence KIVSTFYTVVFPMLNLMIYSL. Over 292–305 the chain is Cytoplasmic; it reads RNKDVKEALKKLLP.

This sequence belongs to the G-protein coupled receptor 1 family.

It localises to the cell membrane. Its function is as follows. Odorant receptor. The protein is Olfactory receptor 9G1 (OR9G1) of Homo sapiens (Human).